A 181-amino-acid polypeptide reads, in one-letter code: uncharacterized protein (181 aa).

Belongs to the M.jannaschii MJ0150/MJ0739/MJ0745/MJ1460/MJ1642 family.

This is an uncharacterized protein from Methanocaldococcus jannaschii (strain ATCC 43067 / DSM 2661 / JAL-1 / JCM 10045 / NBRC 100440) (Methanococcus jannaschii).